The primary structure comprises 487 residues: Transcription factor GTE5, chloroplastic (487 aa).

A chloroplast-targeting transit peptide spans 1–32; it reads MSSEHISGGGASKTKKHKWSSSQNRPKPMGVS. 3 disordered regions span residues 1–48, 93–127, and 400–487; these read MSSE…NSFA, ANPG…GADK, and KNEA…DNGN. In terms of domain architecture, Bromo spans 127–233; the sequence is KGTVQIFKNC…NMFEDKWVSI (107 aa). The NET domain maps to 320-401; sequence EEEAPVNNRD…GYKESLSKKN (82 aa). Positions 400–414 are enriched in basic and acidic residues; it reads KNEAHGFGSERDAES. The segment covering 415-435 has biased composition (polar residues); it reads VHNSIQEPTTLVSGTTTSRVT. The segment covering 451-487 has biased composition (low complexity); it reads NNASGSSSSNSSSSDSGSCSSDTDSDSSSGRGSDNGN.

In terms of assembly, interacts with SIZ1 (via PHD domain). Post-translationally, sumoylated by SIZ1.

The protein localises to the plastid. Its subcellular location is the chloroplast. This is Transcription factor GTE5, chloroplastic (GTE5) from Arabidopsis thaliana (Mouse-ear cress).